The sequence spans 166 residues: Large ribosomal subunit protein uL10 (166 aa).

The protein belongs to the universal ribosomal protein uL10 family. As to quaternary structure, part of the ribosomal stalk of the 50S ribosomal subunit. The N-terminus interacts with L11 and the large rRNA to form the base of the stalk. The C-terminus forms an elongated spine to which L12 dimers bind in a sequential fashion forming a multimeric L10(L12)X complex.

Forms part of the ribosomal stalk, playing a central role in the interaction of the ribosome with GTP-bound translation factors. The protein is Large ribosomal subunit protein uL10 of Staphylococcus carnosus (strain TM300).